A 647-amino-acid polypeptide reads, in one-letter code: DNA mismatch repair protein MutL (647 aa).

The protein belongs to the DNA mismatch repair MutL/HexB family.

Functionally, this protein is involved in the repair of mismatches in DNA. It is required for dam-dependent methyl-directed DNA mismatch repair. May act as a 'molecular matchmaker', a protein that promotes the formation of a stable complex between two or more DNA-binding proteins in an ATP-dependent manner without itself being part of a final effector complex. The polypeptide is DNA mismatch repair protein MutL (Koribacter versatilis (strain Ellin345)).